The following is a 465-amino-acid chain: Mothers against decapentaplegic homolog 5 (465 aa).

The residue at position 2 (Thr2) is an N-acetylthreonine. Positions 13–137 (PAVKRLLGWK…YKRVESPVLP (125 aa)) constitute an MH1 domain. Residues Cys65, Cys110, Cys122, and His127 each coordinate Zn(2+). The tract at residues 163–251 (NEPHMPQNAT…DTSSNMIPQT (89 aa)) is disordered. Residues 169–182 (QNATFPDSFHQPNN) are compositionally biased toward polar residues. Positions 186 to 197 (PLSPNSPYPPSP) are enriched in pro residues. A compositionally biased stretch (low complexity) spans 198–214 (ASSTYPNSPASSGPGSP). The span at 237-251 (NSQPMDTSSNMIPQT) shows a compositional bias: polar residues. Positions 271 to 465 (WCSIVYYELN…SPLNPISSVS (195 aa)) constitute an MH2 domain. Phosphoserine occurs at positions 463 and 465.

Belongs to the dwarfin/SMAD family. In terms of assembly, homodimer. Forms trimers with the co-SMAD SMAD4. Interacts with PEBP2-alpha subunit and SMURF1. Interacts with SUV39H1 and SUV39H2. Interacts (via MH2 domain) with LEMD3. Interacts with WWP1. Interacts with TMEM119. Interacts with ZNF8. Interacts with RANBP3L. Interacts with HK1. Interacts with HGS; this interaction attenuates BMP signaling. In terms of processing, phosphorylated on serine by BMP (bone morphogenetic proteins) type 1 receptor kinase. Ubiquitin-mediated proteolysis by SMAD-specific E3 ubiquitin ligase SMURF1. As to expression, predominantly expressed in mesenchyme and somites during embryogenesis, and present in many tissues of the adult.

Its subcellular location is the cytoplasm. The protein resides in the nucleus. It is found in the mitochondrion. In terms of biological role, transcriptional regulator that plays a role in various cellular processes including embryonic development, cell differentiation, angiogenesis and tissue homeostasis. Upon BMP ligand binding to their receptors at the cell surface, is phosphorylated by activated type I BMP receptors (BMPRIs) and associates with SMAD4 to form a heteromeric complex which translocates into the nucleus acting as transcription factor. In turn, the hetero-trimeric complex recognizes cis-regulatory elements containing Smad Binding Elements (SBEs) to modulate the outcome of the signaling network. Non-phosphorylated SMAD5 has a cytoplasmic role in energy metabolism regulation by promoting mitochondrial respiration and glycolysis in response to cytoplasmic pH changes. Mechanistically, interacts with hexokinase 1/HK1 and thereby accelerates glycolysis. This Mus musculus (Mouse) protein is Mothers against decapentaplegic homolog 5 (Smad5).